The sequence spans 312 residues: Phospho-N-acetylmuramoyl-pentapeptide-transferase (312 aa).

Transmembrane regions (helical) follow at residues 1–21 (MMVVAALLSWFLLGLFIHYSK), 48–68 (GVAFVLALLLVFVGLLAFGGI), 76–96 (EVMILLAALGMGVVGGIDDFL), 115–135 (FPLQVLVALLFAGFAAPLASH), 140–160 (GFMSIGGYPIFDMLFIAFVMV), 165–185 (AFNFTDGLDGLLAGVGMIVLL), 214–234 (VFMGDMGSHAIGAVAAGAYAL), 238–258 (VWLLPIAAIIPVAAVLSVVIQ), and 289–309 (VTLRFWVVTGIATALTWWLMG).

Belongs to the glycosyltransferase 4 family. MraY subfamily. Mg(2+) serves as cofactor.

The protein localises to the cell membrane. The catalysed reaction is UDP-N-acetyl-alpha-D-muramoyl-L-alanyl-gamma-D-glutamyl-meso-2,6-diaminopimeloyl-D-alanyl-D-alanine + di-trans,octa-cis-undecaprenyl phosphate = di-trans,octa-cis-undecaprenyl diphospho-N-acetyl-alpha-D-muramoyl-L-alanyl-D-glutamyl-meso-2,6-diaminopimeloyl-D-alanyl-D-alanine + UMP. It participates in cell wall biogenesis; peptidoglycan biosynthesis. Its function is as follows. Catalyzes the initial step of the lipid cycle reactions in the biosynthesis of the cell wall peptidoglycan: transfers peptidoglycan precursor phospho-MurNAc-pentapeptide from UDP-MurNAc-pentapeptide onto the lipid carrier undecaprenyl phosphate, yielding undecaprenyl-pyrophosphoryl-MurNAc-pentapeptide, known as lipid I. In Deinococcus radiodurans (strain ATCC 13939 / DSM 20539 / JCM 16871 / CCUG 27074 / LMG 4051 / NBRC 15346 / NCIMB 9279 / VKM B-1422 / R1), this protein is Phospho-N-acetylmuramoyl-pentapeptide-transferase.